Here is a 285-residue protein sequence, read N- to C-terminus: Nucleotide-binding protein Pnap_0906 (285 aa).

ATP is bound at residue 8–15 (GMSGSGKS). 57–60 (DVRS) contacts GTP.

The protein belongs to the RapZ-like family.

In terms of biological role, displays ATPase and GTPase activities. The sequence is that of Nucleotide-binding protein Pnap_0906 from Polaromonas naphthalenivorans (strain CJ2).